The following is a 441-amino-acid chain: Methylenetetrahydrofolate--tRNA-(uracil-5-)-methyltransferase TrmFO (441 aa).

7-12 (GAGLSG) serves as a coordination point for FAD.

Belongs to the MnmG family. TrmFO subfamily. The cofactor is FAD.

The protein resides in the cytoplasm. The catalysed reaction is uridine(54) in tRNA + (6R)-5,10-methylene-5,6,7,8-tetrahydrofolate + NADH + H(+) = 5-methyluridine(54) in tRNA + (6S)-5,6,7,8-tetrahydrofolate + NAD(+). The enzyme catalyses uridine(54) in tRNA + (6R)-5,10-methylene-5,6,7,8-tetrahydrofolate + NADPH + H(+) = 5-methyluridine(54) in tRNA + (6S)-5,6,7,8-tetrahydrofolate + NADP(+). Its function is as follows. Catalyzes the folate-dependent formation of 5-methyl-uridine at position 54 (M-5-U54) in all tRNAs. The chain is Methylenetetrahydrofolate--tRNA-(uracil-5-)-methyltransferase TrmFO from Pseudothermotoga lettingae (strain ATCC BAA-301 / DSM 14385 / NBRC 107922 / TMO) (Thermotoga lettingae).